The primary structure comprises 341 residues: 5-formaminoimidazole-4-carboxamide-1-(beta)-D-ribofuranosyl 5'-monophosphate synthetase (341 aa).

2 residues coordinate 5-amino-1-(5-phospho-beta-D-ribosyl)imidazole-4-carboxamide: H10 and T77. One can recognise an ATP-grasp domain in the interval 106-317; it reads DREMKEKLMR…YYNLLFNETM (212 aa). ATP-binding positions include 132–188 and E210; that span reads EKLS…VLAY. N238 provides a ligand contact to 5-amino-1-(5-phospho-beta-D-ribosyl)imidazole-4-carboxamide. Mg(2+)-binding residues include E277 and E290.

It belongs to the phosphohexose mutase family. It depends on Mg(2+) as a cofactor. Requires Mn(2+) as cofactor.

The enzyme catalyses 5-amino-1-(5-phospho-beta-D-ribosyl)imidazole-4-carboxamide + formate + ATP = 5-formamido-1-(5-phospho-D-ribosyl)imidazole-4-carboxamide + ADP + phosphate. The protein operates within purine metabolism; IMP biosynthesis via de novo pathway; 5-formamido-1-(5-phospho-D-ribosyl)imidazole-4-carboxamide from 5-amino-1-(5-phospho-D-ribosyl)imidazole-4-carboxamide (formate route): step 1/1. In terms of biological role, catalyzes the ATP- and formate-dependent formylation of 5-aminoimidazole-4-carboxamide-1-beta-d-ribofuranosyl 5'-monophosphate (AICAR) to 5-formaminoimidazole-4-carboxamide-1-beta-d-ribofuranosyl 5'-monophosphate (FAICAR) in the absence of folates. This chain is 5-formaminoimidazole-4-carboxamide-1-(beta)-D-ribofuranosyl 5'-monophosphate synthetase, found in Nitrosopumilus maritimus (strain SCM1).